The primary structure comprises 177 residues: Large ribosomal subunit protein uL6 (177 aa).

The protein belongs to the universal ribosomal protein uL6 family. Part of the 50S ribosomal subunit.

Its function is as follows. This protein binds to the 23S rRNA, and is important in its secondary structure. It is located near the subunit interface in the base of the L7/L12 stalk, and near the tRNA binding site of the peptidyltransferase center. The polypeptide is Large ribosomal subunit protein uL6 (Pseudomonas syringae pv. syringae (strain B728a)).